Consider the following 417-residue polypeptide: uncharacterized protein (417 aa).

The N-terminal stretch at 1–21 is a signal peptide; the sequence is MPYYWGAILIGGVFLAGCTQN.

This is an uncharacterized protein from Methanocaldococcus jannaschii (strain ATCC 43067 / DSM 2661 / JAL-1 / JCM 10045 / NBRC 100440) (Methanococcus jannaschii).